The following is a 418-amino-acid chain: Voltage-gated ClC-type chloride channel ClcB (418 aa).

Residues 1–4 (MFRR) are Cytoplasmic-facing. The chain crosses the membrane as a helical span at residues 5-25 (LLIATIVGILAAFAVAGFRHA). Residues 26–53 (MLLLEWLFLNNDSGSLVNAATNLSPWRR) lie on the Periplasmic side of the membrane. Residues 54–74 (LLTPALGGLAAGLLLMGWQKF) form a helical membrane-spanning segment. Residues 75 to 145 (TQQRPHAPTD…QRFTPRQEWK (71 aa)) are Cytoplasmic-facing. A helical membrane pass occupies residues 146-166 (LWIACGAAAGMAAAYRAPLAG). The Periplasmic portion of the chain corresponds to 167-177 (SLFIAEVLFGT). Residues 178 to 200 (MMLASLGPVIISAVVALLISNLI) form a helical membrane-spanning segment. Residues 201 to 221 (NHSDALLYSVQLSVTVQARDY) are Cytoplasmic-facing. A helical transmembrane segment spans residues 222-242 (ALIISTGVLAGLCGPLLLTLM). The Periplasmic portion of the chain corresponds to 243–257 (NACHRGFVSLKLAPP). Residues 258–278 (WQLALGGLIVGLLSLFTPAVW) traverse the membrane as a helical segment. Over 279–290 (GNGYSTVQSFLT) the chain is Cytoplasmic. A helical transmembrane segment spans residues 291 to 311 (APPLLMIIAGIFLCKLCAVLA). The Periplasmic portion of the chain corresponds to 312-315 (SSGS). The helical transmembrane segment at 316–336 (GAPGGVFTPTLFIGLAIGMLY) threads the bilayer. Residues 337–351 (GRSLGLWLPDGEEIT) are Cytoplasmic-facing. Residues 352 to 372 (LLLGLTGMATLLAATTHAPIM) traverse the membrane as a helical segment. The Periplasmic portion of the chain corresponds to 373–379 (STLMICE). The helical transmembrane segment at 380–400 (MTGEYQLLPGLLIACVIASVI) threads the bilayer. Residues 401-418 (SRTLHRDSIYRQHTAKHS) are Cytoplasmic-facing.

This sequence belongs to the chloride channel (TC 2.A.49) family. ClcB subfamily.

The protein localises to the cell inner membrane. Probably acts as an electrical shunt for an outwardly-directed proton pump that is linked to amino acid decarboxylation, as part of the extreme acid resistance (XAR) response. The chain is Voltage-gated ClC-type chloride channel ClcB (clcB) from Escherichia coli O6:H1 (strain CFT073 / ATCC 700928 / UPEC).